We begin with the raw amino-acid sequence, 177 residues long: R-phycoerythrin beta chain (177 aa).

The phycourobilin site is built by Cys50 and Cys61. The residue at position 72 (Asn72) is an N4-methylasparagine. Cys82 and Cys158 together coordinate (2R,3E)-phycoerythrobilin.

This sequence belongs to the phycobiliprotein family. Heterodimer of an alpha and a beta chain. Contains two covalently linked phycoerythrobilin chromophores and one covalently linked phycourobilin chromophore.

It localises to the plastid. The protein localises to the chloroplast thylakoid membrane. Functionally, light-harvesting photosynthetic bile pigment-protein from the phycobiliprotein complex. The protein is R-phycoerythrin beta chain (cpeB) of Pyropia yezoensis (Susabi-nori).